The chain runs to 362 residues: tRNA 2-selenouridine synthase (362 aa).

A Rhodanese domain is found at Phe-12–Glu-135. The active-site S-selanylcysteine intermediate is the Cys-95.

This sequence belongs to the SelU family. As to quaternary structure, monomer.

It catalyses the reaction 5-methylaminomethyl-2-thiouridine(34) in tRNA + selenophosphate + (2E)-geranyl diphosphate + H2O + H(+) = 5-methylaminomethyl-2-selenouridine(34) in tRNA + (2E)-thiogeraniol + phosphate + diphosphate. The catalysed reaction is 5-methylaminomethyl-2-thiouridine(34) in tRNA + (2E)-geranyl diphosphate = 5-methylaminomethyl-S-(2E)-geranyl-thiouridine(34) in tRNA + diphosphate. It carries out the reaction 5-methylaminomethyl-S-(2E)-geranyl-thiouridine(34) in tRNA + selenophosphate + H(+) = 5-methylaminomethyl-2-(Se-phospho)selenouridine(34) in tRNA + (2E)-thiogeraniol. The enzyme catalyses 5-methylaminomethyl-2-(Se-phospho)selenouridine(34) in tRNA + H2O = 5-methylaminomethyl-2-selenouridine(34) in tRNA + phosphate. Its function is as follows. Involved in the post-transcriptional modification of the uridine at the wobble position (U34) of tRNA(Lys), tRNA(Glu) and tRNA(Gln). Catalyzes the conversion of 2-thiouridine (S2U-RNA) to 2-selenouridine (Se2U-RNA). Acts in a two-step process involving geranylation of 2-thiouridine (S2U) to S-geranyl-2-thiouridine (geS2U) and subsequent selenation of the latter derivative to 2-selenouridine (Se2U) in the tRNA chain. This is tRNA 2-selenouridine synthase from Alcanivorax borkumensis (strain ATCC 700651 / DSM 11573 / NCIMB 13689 / SK2).